The following is a 225-amino-acid chain: MNSIEFPLFHRTTQNSVISTTLNDLSNWSRLSSLWPLLYGTSCCFIEFASLIGSRFDFDRYGLVPRSSPRQADLILTAGTVTMKMAPSLVRLYEQMPEPKYVIAMGACTITGGMFSTDSYSTVRGVDKLIPVDVYLPGCPPKPEAIIDAITKLRKKISREIYPDRILSQRENRCFTTNHKFQVGHSIHTGNYDQGFLYQPPSTSEIPPETFFKYKSSVSSHELVN.

Residues Cys-43, Cys-44, Cys-108, and Cys-139 each coordinate [4Fe-4S] cluster.

The protein belongs to the complex I 20 kDa subunit family. As to quaternary structure, NDH is composed of at least 16 different subunits, 5 of which are encoded in the nucleus. [4Fe-4S] cluster serves as cofactor.

The protein localises to the plastid. Its subcellular location is the chloroplast thylakoid membrane. The enzyme catalyses a plastoquinone + NADH + (n+1) H(+)(in) = a plastoquinol + NAD(+) + n H(+)(out). The catalysed reaction is a plastoquinone + NADPH + (n+1) H(+)(in) = a plastoquinol + NADP(+) + n H(+)(out). Functionally, NDH shuttles electrons from NAD(P)H:plastoquinone, via FMN and iron-sulfur (Fe-S) centers, to quinones in the photosynthetic chain and possibly in a chloroplast respiratory chain. The immediate electron acceptor for the enzyme in this species is believed to be plastoquinone. Couples the redox reaction to proton translocation, and thus conserves the redox energy in a proton gradient. In Guizotia abyssinica (Niger), this protein is NAD(P)H-quinone oxidoreductase subunit K, chloroplastic.